Consider the following 947-residue polypeptide: Protocadherin alpha-4 (947 aa).

Positions 1–29 are cleaved as a signal peptide; the sequence is MEFSWGSGQESRRLLLLLLLLAAWEAGNG. 6 Cadherin domains span residues 30-133, 134-242, 243-350, 351-455, 456-565, and 588-678; these read QLHY…PPVF, PATQ…APAF, DRTI…VPDL, EFKS…APAF, AQPE…APAL, and GHVV…APKA. The Extracellular portion of the chain corresponds to 30 to 697; that stretch reads QLHYSVSEEA…GPDAALVDVN (668 aa). C96 and C102 are joined by a disulfide. Residues N139, N257, and N265 are each glycosylated (N-linked (GlcNAc...) asparagine). N-linked (GlcNAc...) asparagine glycosylation is present at N548. A helical membrane pass occupies residues 698–718; it reads VYLIIAICAVSSLLVLTLLLY. The Cytoplasmic segment spans residues 719 to 947; the sequence is TALRCSALPT…GNSTTDNSDQ (229 aa). PXXP repeat units lie at residues 734-737, 774-777, 796-799, 829-832, 870-873, and 888-891; these read PGKP, PSLP, PRQP, PGGP, PGNP, and PGSP. Residues 734–891 form a 6 X 4 AA repeats of P-X-X-P region; the sequence is PGKPTLVCSS…PDKFIIPGSP (158 aa). The segment at 738–947 is required for interaction with FYN; sequence TLVCSSAVGS…GNSTTDNSDQ (210 aa). 3 disordered regions span residues 754–805, 828–853, and 868–947; these read RRPR…DWRY, GPGG…EVSP, and YGPG…NSDQ. Over residues 906-920 the composition is skewed to basic and acidic residues; it reads DKSDFITFGKKEETK.

As to quaternary structure, forms homodimers in trans (molecules expressed by two different cells). Forms promiscuous heterodimers in cis (at the plasma membrane of the same cell) with other protocadherins. Interacts with FYN.

The protein resides in the cell membrane. Its function is as follows. Calcium-dependent cell-adhesion protein involved in cells self-recognition and non-self discrimination. Thereby, it is involved in the establishment and maintenance of specific neuronal connections in the brain. The sequence is that of Protocadherin alpha-4 from Homo sapiens (Human).